A 344-amino-acid polypeptide reads, in one-letter code: Selenide, water dikinase (344 aa).

Residue cysteine 15 is part of the active site. ATP contacts are provided by residues lysine 18 and 46-48 (TKD). A Mg(2+)-binding site is contributed by aspartate 49. Residues aspartate 66, aspartate 89, and 137-139 (GHS) each bind ATP. Aspartate 89 contributes to the Mg(2+) binding site. Residue aspartate 225 participates in Mg(2+) binding.

This sequence belongs to the selenophosphate synthase 1 family. Class I subfamily. Homodimer. It depends on Mg(2+) as a cofactor.

It carries out the reaction hydrogenselenide + ATP + H2O = selenophosphate + AMP + phosphate + 2 H(+). In terms of biological role, synthesizes selenophosphate from selenide and ATP. This Colwellia psychrerythraea (strain 34H / ATCC BAA-681) (Vibrio psychroerythus) protein is Selenide, water dikinase.